Here is a 338-residue protein sequence, read N- to C-terminus: UPF0284 protein TV0153 (338 aa).

It belongs to the UPF0284 family.

The chain is UPF0284 protein TV0153 from Thermoplasma volcanium (strain ATCC 51530 / DSM 4299 / JCM 9571 / NBRC 15438 / GSS1).